A 280-amino-acid chain; its full sequence is DegV domain-containing protein TTE1491 (280 aa).

Residues 4–279 (IAIVTDSLSD…PDAAGVFFEE (276 aa)) form the DegV domain. Hexadecanoate-binding residues include Thr-61 and Ser-93.

Functionally, may bind long-chain fatty acids, such as palmitate, and may play a role in lipid transport or fatty acid metabolism. This is DegV domain-containing protein TTE1491 from Caldanaerobacter subterraneus subsp. tengcongensis (strain DSM 15242 / JCM 11007 / NBRC 100824 / MB4) (Thermoanaerobacter tengcongensis).